The primary structure comprises 983 residues: 26S proteasome regulatory subunit RPN1 (983 aa).

The span at 1–26 shows a compositional bias: basic and acidic residues; the sequence is MSTDKKKEEVPKPETEDLTVKDETKN. Disordered stretches follow at residues 1-44 and 169-188; these read MSTD…EDQK and VEKEAEDNSTSTESSPQPPH. PC repeat units follow at residues 415–447, 448–484, 485–519, 520–557, and 563–595; these read SAVASIGSIYQWNIDGLQQLDKYLYVDEPEVKA, GGLLGIGIASAGVHHDVEPALLLLQEYINHSDTKIST, AAILGIGIAFAGSKNDEVLGLLLPVVSNTENSLEL, AAIAALALSHVFVGTCNGDITTAVMDNFLERTPLELKS, and LALSLGLLYLGQGEHVDDVLETINAIEHPMTSA. 2 disordered regions span residues 625 to 644 and 662 to 724; these read AVKSSDEDEDEDNEELSQED and EPQG…GAND. The span at 630-642 shows a compositional bias: acidic residues; the sequence is DEDEDEDNEELSQ. Residues 688–705 are compositionally biased toward basic and acidic residues; it reads NVKKEENEEEKTEKSEKT. The span at 706–718 shows a compositional bias: acidic residues; it reads ENDEEEEDEEESK. PC repeat units follow at residues 768 to 799 and 800 to 834; these read LAMGLVSVADPQMKVFDTLTRFSHDPDLDVSM and NSIFAMGLCGVGTNNARLAQLLRQLASYYSREQDA.

It belongs to the proteasome subunit S2 family.

Acts as a regulatory subunit of the 26 proteasome which is involved in the ATP-dependent degradation of ubiquitinated proteins. The chain is 26S proteasome regulatory subunit RPN1 (RPN1) from Candida glabrata (strain ATCC 2001 / BCRC 20586 / JCM 3761 / NBRC 0622 / NRRL Y-65 / CBS 138) (Yeast).